Here is a 163-residue protein sequence, read N- to C-terminus: Nucleotide-binding protein YajQ (163 aa).

It belongs to the YajQ family.

In terms of biological role, nucleotide-binding protein. This is Nucleotide-binding protein YajQ from Shigella dysenteriae serotype 1 (strain Sd197).